The following is a 400-amino-acid chain: Large envelope protein (400 aa).

Methionine 1 is modified (N-acetylmethionine). The N-myristoyl glycine; by host moiety is linked to residue glycine 2. Positions 2–119 are pre-S1; the sequence is GAPLSTTRRG…PPLRDTHPQA (118 aa). A pre-S region spans residues 2-174; that stretch reads GAPLSTTRRG…FSKTGGPAMN (173 aa). The Virion surface; in external conformation segment spans residues 2–181; that stretch reads GAPLSTTRRG…AMNMDNITSG (180 aa). The Intravirion; in internal conformation segment spans residues 2-253; sequence GAPLSTTRRG…PGYRWMCLRR (252 aa). The N-linked (GlcNAc...) asparagine glycan is linked to proline 4. Residues 84–117 are disordered; it reads VLTTLPADPPPASTNRRSGRKPTPVSPPLRDTHP. Residues 120–174 form a pre-S2 region; the sequence is MQWNSTQFHQALLDPRVRALYFPAGGSSSGTQNPAPTIASLTSSIFSKTGGPAMN. The helical transmembrane segment at 182-202 threads the bilayer; the sequence is LLGPLLVLQAVCFLLTKILTI. The Intravirion; in external conformation portion of the chain corresponds to 203–253; sequence PQSLDSWWTSLNFLGGLPGCPGQNSQSPTSNHLPTSCPPTCPGYRWMCLRR. A helical membrane pass occupies residues 254 to 274; the sequence is FIIFLFILLLCLIFLLVLLDY. Residues 275 to 348 lie on the Virion surface side of the membrane; it reads QGMLPVCPLL…WASARFSWLS (74 aa). Asparagine 320 is a glycosylation site (N-linked (GlcNAc...) asparagine; by host). Residues 349 to 369 form a helical membrane-spanning segment; sequence LLVQFVQWCVGLSPTVWLLVI. Topologically, residues 370 to 375 are intravirion; the sequence is WMIWYW. Residues 376–398 traverse the membrane as a helical segment; the sequence is GPNLCSILSPFIPLLPIFCYLWV. Topologically, residues 399 to 400 are virion surface; that stretch reads SI.

This sequence belongs to the orthohepadnavirus major surface antigen family. In its internal form (Li-HBsAg), interacts with the capsid protein and with the isoform S. Interacts with host chaperone CANX. In terms of assembly, associates with host chaperone CANX through its pre-S2 N glycan; this association may be essential for isoform M proper secretion. As to quaternary structure, interacts with isoform L. Interacts with the antigens of satellite virus HDV (HDVAgs); this interaction is required for encapsidation of HDV genomic RNA. Post-translationally, isoform M is N-terminally acetylated by host at a ratio of 90%, and N-glycosylated by host at the pre-S2 region. In terms of processing, myristoylated.

The protein localises to the virion membrane. Its function is as follows. The large envelope protein exists in two topological conformations, one which is termed 'external' or Le-HBsAg and the other 'internal' or Li-HBsAg. In its external conformation the protein attaches the virus to cell receptors and thereby initiating infection. This interaction determines the species specificity and liver tropism. This attachment induces virion internalization predominantly through caveolin-mediated endocytosis. The large envelope protein also assures fusion between virion membrane and endosomal membrane. In its internal conformation the protein plays a role in virion morphogenesis and mediates the contact with the nucleocapsid like a matrix protein. Functionally, the middle envelope protein plays an important role in the budding of the virion. It is involved in the induction of budding in a nucleocapsid independent way. In this process the majority of envelope proteins bud to form subviral lipoprotein particles of 22 nm of diameter that do not contain a nucleocapsid. This chain is Large envelope protein, found in Hepatitis B virus genotype F2 (isolate Brazil/w4B) (HBV-F).